A 445-amino-acid polypeptide reads, in one-letter code: Phenylacetate-coenzyme A ligase (445 aa).

The protein belongs to the phenylacetyl-CoA ligase family. In terms of assembly, monomer.

It catalyses the reaction 2-phenylacetate + ATP + CoA = phenylacetyl-CoA + AMP + diphosphate. It participates in aromatic compound metabolism; phenylacetate degradation. Its function is as follows. Catalyzes the activation of phenylacetic acid (PA) to phenylacetyl-CoA (PA-CoA). Involved in the phenylalanine metabolism. This is Phenylacetate-coenzyme A ligase from Thermus thermophilus (strain ATCC BAA-163 / DSM 7039 / HB27).